The following is a 50-amino-acid chain: Large ribosomal subunit protein bL33B (50 aa).

It belongs to the bacterial ribosomal protein bL33 family.

This is Large ribosomal subunit protein bL33B from Mycoplasmopsis agalactiae (strain NCTC 10123 / CIP 59.7 / PG2) (Mycoplasma agalactiae).